The chain runs to 214 residues: NKG2-D type II integral membrane protein (214 aa).

Residues 1-56 (MGWIRDRRSPSSMEIRELHNRDVINRGAFKSRQKRTQTLITSKCGENPSPFFLARS) are Cytoplasmic-facing. A helical; Signal-anchor for type II membrane protein transmembrane segment spans residues 57–77 (IAIAMGIRFIVMVMIYSGMII). Residues 78–214 (NLLFNQEAPS…NTYICMKRTV (137 aa)) lie on the Extracellular side of the membrane. 2 disulfides stabilise this stretch: C94/C103 and C97/C108. The C-type lectin domain occupies 98 to 210 (PKNWICYRNS…CLTLNTYICM (113 aa)). N-linked (GlcNAc...) asparagine glycans are attached at residues N113, N129, N161, and N184. 2 cysteine pairs are disulfide-bonded: C125/C209 and C187/C201.

As to quaternary structure, homodimer; disulfide-linked. Heterohexamer composed of two subunits of KLRK1 and four subunits of HCST/DAP10. Interacts (via transmembrane domain) with HCST/DAP10 (via transmembrane domain); the interaction is required for KLRK1 NK cell surface and induces NK cell-mediated cytotoxicity. Can form disulfide-bonded heterodimer with CD94. Interacts with CEACAM1; recruits PTPN6 that dephosphorylates VAV1. As to expression, detected in peripheral blood leukocytes, macrophages, monocytes and natural killer cells.

The protein resides in the cell membrane. In terms of biological role, functions as an activating and costimulatory receptor involved in immunosurveillance upon binding to various cellular stress-inducible ligands displayed at the surface of autologous tumor cells and virus-infected cells. Provides both stimulatory and costimulatory innate immune responses on activated killer (NK) cells, leading to cytotoxic activity. Acts as a costimulatory receptor for T-cell receptor (TCR) in CD8(+) T-cell-mediated adaptive immune responses by amplifying T-cell activation. Stimulates perforin-mediated elimination of ligand-expressing tumor cells. Signaling involves calcium influx, culminating in the expression of TNF-alpha. Participates in NK cell-mediated bone marrow graft rejection. May play a regulatory role in differentiation and survival of NK cells. Binds to ligands belonging to various subfamilies of MHC class I-related glycoproteins. This is NKG2-D type II integral membrane protein (KLRK1) from Sus scrofa (Pig).